The primary structure comprises 234 residues: Zinc finger BED domain-containing protein 3 (234 aa).

Positions Ala-19–Gly-42 are disordered. A BED-type zinc finger spans residues Ala-43 to Ser-104. Zn(2+) contacts are provided by Cys-69, Cys-72, His-92, and His-97. Disordered regions lie at residues Arg-94–Glu-126 and Arg-202–Asp-225. Residues Pro-111–Ala-122 show a composition bias toward pro residues. Basic and acidic residues predominate over residues Leu-216–Asp-225.

As to quaternary structure, associates with the subcortical maternal complex (SCMC) composed of at least NLRP5, KHDC3L, OOEP, and TLE6 via interaction with NLRP5 and TLE6. Interacts with AXIN1; the interaction is direct, enhanced by protein kinase GSK3B and casein kinase CSNK1E activities and decreases GSK3B-induced beta-catenin serine and threonine phosphorylations. As to expression, secreted in blood plasma, and expressed in skeletal muscle and adipose tissue (at protein level).

It localises to the cytoplasm. Its subcellular location is the membrane. The protein resides in the secreted. Acts as a positive regulator in the activation of the canonical Wnt/beta-catenin signaling pathway by stabilizing cytoplasmic beta-catenin. Involved in transcription activation of Wnt target gene expression. Plays a role in symmetric division of blastomeres in the early stages of embryogenesis via regulation of mitotic spindle central positioning and organization of the F-actin filament network. Plays a role in regulating the distribution of cellular organelles, via modulation of cytoskeletal dynamics and cytoplasmic lattice formation. The sequence is that of Zinc finger BED domain-containing protein 3 (ZBED3) from Homo sapiens (Human).